The chain runs to 130 residues: Anti-adapter protein IraD (130 aa).

Belongs to the GpW/Gp25 family. IraD subfamily. As to quaternary structure, interacts with RssB.

It localises to the cytoplasm. Inhibits RpoS proteolysis by regulating RssB activity, thereby increasing the stability of the sigma stress factor RpoS during oxidative stress. Its effect on RpoS stability is due to its interaction with RssB, which probably blocks the interaction of RssB with RpoS, and the consequent delivery of the RssB-RpoS complex to the ClpXP protein degradation pathway. This is Anti-adapter protein IraD from Escherichia coli (strain K12 / MC4100 / BW2952).